Consider the following 130-residue polypeptide: UPF0251 protein Mevan_1492 (130 aa).

Belongs to the UPF0251 family.

This chain is UPF0251 protein Mevan_1492, found in Methanococcus vannielii (strain ATCC 35089 / DSM 1224 / JCM 13029 / OCM 148 / SB).